The sequence spans 195 residues: Imidazoleglycerol-phosphate dehydratase (195 aa).

This sequence belongs to the imidazoleglycerol-phosphate dehydratase family.

Its subcellular location is the cytoplasm. The catalysed reaction is D-erythro-1-(imidazol-4-yl)glycerol 3-phosphate = 3-(imidazol-4-yl)-2-oxopropyl phosphate + H2O. It functions in the pathway amino-acid biosynthesis; L-histidine biosynthesis; L-histidine from 5-phospho-alpha-D-ribose 1-diphosphate: step 6/9. The polypeptide is Imidazoleglycerol-phosphate dehydratase (Geobacter sulfurreducens (strain ATCC 51573 / DSM 12127 / PCA)).